We begin with the raw amino-acid sequence, 61 residues long: Large ribosomal subunit protein uL30 (61 aa).

It belongs to the universal ribosomal protein uL30 family. As to quaternary structure, part of the 50S ribosomal subunit.

This chain is Large ribosomal subunit protein uL30, found in Chromobacterium violaceum (strain ATCC 12472 / DSM 30191 / JCM 1249 / CCUG 213 / NBRC 12614 / NCIMB 9131 / NCTC 9757 / MK).